Reading from the N-terminus, the 399-residue chain is ATP phosphoribosyltransferase regulatory subunit (399 aa).

This sequence belongs to the class-II aminoacyl-tRNA synthetase family. HisZ subfamily. In terms of assembly, heteromultimer composed of HisG and HisZ subunits.

The protein resides in the cytoplasm. It functions in the pathway amino-acid biosynthesis; L-histidine biosynthesis; L-histidine from 5-phospho-alpha-D-ribose 1-diphosphate: step 1/9. Required for the first step of histidine biosynthesis. May allow the feedback regulation of ATP phosphoribosyltransferase activity by histidine. The polypeptide is ATP phosphoribosyltransferase regulatory subunit (Symbiobacterium thermophilum (strain DSM 24528 / JCM 14929 / IAM 14863 / T)).